The following is a 152-amino-acid chain: Phosphopantetheine adenylyltransferase (152 aa).

A substrate-binding site is contributed by S9. ATP contacts are provided by residues 9–10 (SF) and H17. Substrate contacts are provided by K41, T73, and R87. Residues 88–90 (GLR), E98, and 122–128 (TSFISSS) contribute to the ATP site.

The protein belongs to the bacterial CoaD family. Homohexamer. Mg(2+) serves as cofactor.

It is found in the cytoplasm. The enzyme catalyses (R)-4'-phosphopantetheine + ATP + H(+) = 3'-dephospho-CoA + diphosphate. It participates in cofactor biosynthesis; coenzyme A biosynthesis; CoA from (R)-pantothenate: step 4/5. Functionally, reversibly transfers an adenylyl group from ATP to 4'-phosphopantetheine, yielding dephospho-CoA (dPCoA) and pyrophosphate. This chain is Phosphopantetheine adenylyltransferase, found in Flavobacterium johnsoniae (strain ATCC 17061 / DSM 2064 / JCM 8514 / BCRC 14874 / CCUG 350202 / NBRC 14942 / NCIMB 11054 / UW101) (Cytophaga johnsonae).